The following is a 301-amino-acid chain: Acetylglutamate kinase (301 aa).

Substrate is bound by residues 76-77, Arg-98, and Asn-192; that span reads GG.

This sequence belongs to the acetylglutamate kinase family. ArgB subfamily.

The protein localises to the cytoplasm. It catalyses the reaction N-acetyl-L-glutamate + ATP = N-acetyl-L-glutamyl 5-phosphate + ADP. The protein operates within amino-acid biosynthesis; L-arginine biosynthesis; N(2)-acetyl-L-ornithine from L-glutamate: step 2/4. Its function is as follows. Catalyzes the ATP-dependent phosphorylation of N-acetyl-L-glutamate. The chain is Acetylglutamate kinase from Chlorobaculum parvum (strain DSM 263 / NCIMB 8327) (Chlorobium vibrioforme subsp. thiosulfatophilum).